The primary structure comprises 365 residues: Outer capsid protein sigma-3 (365 aa).

The CCHC-type zinc-finger motif lies at Cys51 to Cys73.

It belongs to the orthoreovirus sigma-3 protein family. Heterohexamer of three sigma-3 and three Mu-1 proteins. The RNA-binding form is probably a homodimer. Post-translationally, cleaved during virus the endosomal proteolytic disassembly of the outer capsid.

The protein resides in the virion. It localises to the host cytoplasm. The protein localises to the host nucleus. Stimulates translation by blocking the activation of the dsRNA-dependent protein kinase EIF2AK2/PKR, thereby inhibiting the host interferon response. Sigma3 prevents the activation of EIF2AK2 by competing with the kinase for dsRNA-binding. Functionally, the viral outer shell polypeptides, of which sigma-3 is one, impose structural constraints that prevent elongation of nascent transcripts by the RNA-dependent RNA polymerase lambda-3. The chain is Outer capsid protein sigma-3 (S4) from Reovirus type 3 (strain Dearing) (T3D).